The following is a 245-amino-acid chain: Type I iodothyronine deiodinase (245 aa).

Over 1 to 9 (LSIRVLLHK) the chain is Extracellular. Residues 10–30 (LLILLQVTLSVVVGKTMMILF) form a helical; Signal-anchor for type III membrane protein membrane-spanning segment. Residues 31–245 (PDTTKRYILK…EIRAVLEKLK (215 aa)) lie on the Cytoplasmic side of the membrane. Residue Sec123 is part of the active site. Position 123 (Sec123) is a non-standard amino acid, selenocysteine.

It belongs to the iodothyronine deiodinase family. As to quaternary structure, predominantly monomer. Can form homodimers but homodimerization is not essential for enzyme activity.

It is found in the cell membrane. The protein localises to the endoplasmic reticulum membrane. The protein resides in the basolateral cell membrane. The enzyme catalyses 3,3',5-triiodo-L-thyronine + iodide + A + H(+) = L-thyroxine + AH2. The catalysed reaction is 3,3',5'-triiodo-L-thyronine + iodide + A + H(+) = L-thyroxine + AH2. It catalyses the reaction 3,3'-diiodo-L-thyronine + iodide + A + H(+) = 3,3',5'-triiodo-L-thyronine + AH2. It carries out the reaction 3,3'-diiodo-L-thyronine + iodide + A + H(+) = 3,3',5-triiodo-L-thyronine + AH2. The enzyme catalyses 3'-iodo-L-thyronine + iodide + A + H(+) = 3',5'-diiodo-L-thyronine + AH2. The catalysed reaction is 3-iodo-L-thyronine + iodide + A + H(+) = 3,5-diiodo-L-thyronine + AH2. It catalyses the reaction 3-iodo-L-thyronine + iodide + A + H(+) = 3,3'-diiodo-L-thyronine + AH2. It carries out the reaction 3,3'-diiodothyronamine + iodide + A + H(+) = 3,3',5'-triiodothyronamine + AH2. The enzyme catalyses 3'-iodothyronamine + iodide + A + H(+) = 3',5'-diiodothyronamine + AH2. The catalysed reaction is 3-iodothyronamine + iodide + A + H(+) = 3,3'-diiodothyronamine + AH2. It catalyses the reaction 3,3'-diiodothyronamine + iodide + A + H(+) = 3,3',5-triiodothyronamine + AH2. It carries out the reaction 3-iodothyronamine + iodide + A + H(+) = 3,5-diiodothyronamine + AH2. The enzyme catalyses 3,3'-diiodo-L-thyronine sulfate + iodide + A + H(+) = 3,3',5'-triiodo-L-thyronine sulfate + AH2. The catalysed reaction is 3,3',5'-triiodo-L-thyronine sulfate + iodide + A + H(+) = L-thyroxine sulfate + AH2. It catalyses the reaction 3,3'-diiodo-L-thyronine sulfate + iodide + A + H(+) = 3,3',5-triiodo-L-thyronine sulfate + AH2. Its function is as follows. Plays a crucial role in the metabolism of thyroid hormones (TH) and has specific roles in TH activation and inactivation by deiodination. Catalyzes the deiodiantion of L-thyroxine (T4) to 3,5,3'-triiodothyronine (T3) and 3,3',5'-triiodothyronine (rT3) to 3,3'-diiodothyronine (3,3'-T2) via outer-ring deiodination (ORD). Catalyzes the deiodiantion of T4 to rT3, T3 to 3,3'-T2, 3,5-diiodothyronine (3,5-T2) to 3-monoiodothyronine (3-T1) and 3,3'-T2 to 3-T1 via inner-ring deiodination (IRD). Catalyzes the deiodiantion of 3',5'-diiodothyronine (3',5'-T2) to 3'-monoiodothyronine (3'-T1) via ORD. Catalyzes the phenolic ring deiodinations of 3,3',5'-triiodothyronamine, 3',5'-diiodothyronamine and 3,3'-diiodothyronamine as well as tyrosyl ring deiodinations of 3,5,3'-triiodothyronamine and 3,5-diiodothyronamine. Catalyzes the deiodination of L-thyroxine sulfate and 3,3',5-triiodo-L-thyronine sulfate via IRD and of 3,3',5'-triiodo-L-thyronine sulfate via ORD. This Gallus gallus (Chicken) protein is Type I iodothyronine deiodinase (DIO1).